We begin with the raw amino-acid sequence, 131 residues long: Hyastatin (131 aa).

The first 16 residues, 1–16, serve as a signal peptide directing secretion; that stretch reads MRVLLILVSLAALAHA. Cystine bridges form between Cys103–Cys117, Cys107–Cys124, and Cys118–Cys125. At Lys130 the chain carries Lysine amide.

As to expression, strongly expressed in hemocytes, with weaker expression in gills and epidermis. Expressed at low levels in hepatopancreas.

It localises to the cytoplasmic granule. Its function is as follows. Antimicrobial peptide. Has strong antibacterial activity against the Gram-positive bacterium C.glutamicum (MIC=0.4 uM) and the Gram-negative bacterium E.coli (MIC=12.5 uM). Has weak antibacterial activity against the Gram-positive bacterium S.aureus (MIC&gt;50 uM) and the Gram-negative bacterium P.aeruginosa (MIC&gt;50 uM). Has antifungal activity against S.cerevisiae (MIC=12.5) and C.albicans (MIC=6.3 uM). Has weak antifungal activity against the mold B.cinerea. Presents chitin-binding activity. The polypeptide is Hyastatin (Hyas araneus (Atlantic lyre crab)).